Here is a 433-residue protein sequence, read N- to C-terminus: Inward rectifier potassium channel 18 (433 aa).

The Cytoplasmic segment spans residues 1–77 (MTAASRANPY…LADMFTTCVD (77 aa)). Residues 78–104 (IRWRYMLLIFSLAFLASWLLFGVIFWV) form a helical membrane-spanning segment. Over 105 to 129 (IAVAHGDLEPAEGHGRTPCVMQVHG) the chain is Extracellular. An intramembrane region (helical; Pore-forming) is located at residues 130 to 146 (FMAAFLFSIETQTTIGY). Residues 143–148 (TIGYGL) carry the Selectivity filter motif. Residues 147 to 155 (GLRCVTEEC) are Extracellular-facing. Residues 156–183 (LVAVFMVVAQSIVGCIIDSFMIGAIMAK) traverse the membrane as a helical segment. Residues 184-433 (MARPKKRAQT…QRPYRRGSEI (250 aa)) are Cytoplasmic-facing. Residues 387-433 (DEEDEADGDQDGRSRDGLSPQARHDFDRLQAGGGVLEQRPYRRGSEI) are disordered. The segment covering 396–414 (QDGRSRDGLSPQARHDFDR) has biased composition (basic and acidic residues).

Belongs to the inward rectifier-type potassium channel (TC 1.A.2.1) family. KCNJ12 subfamily. As to quaternary structure, can form heteromeric channels with Kir2.1/KCNJ2. Can form heteromeric channels with Kir2.2/KCNJ12. Post-translationally, probably phosphorylated by PKC; decreases single-channel open probability. In terms of tissue distribution, specifically expressed in skeletal muscle.

Its subcellular location is the cell membrane. It is found in the endoplasmic reticulum. The catalysed reaction is K(+)(in) = K(+)(out). Inward rectifier potassium channels are characterized by a greater tendency to allow potassium to flow into the cell rather than out of it. Their voltage dependence is regulated by the concentration of extracellular potassium; as external potassium is raised, the voltage range of the channel opening shifts to more positive voltages. The inward rectification is mainly due to the blockage of outward current by internal magnesium. The polypeptide is Inward rectifier potassium channel 18 (KCNJ18) (Homo sapiens (Human)).